The chain runs to 461 residues: MSSFTKEEFDCHILDEGFTAKDILDQKINEVSSSDDKDAFYVADLGDILKKHLRWLKALPRVTPFYAVKCNDSRAIVSTLAATGTGFDCASKTEIQLVQGLGVPPERIIYANPCKQVSQIKYAASSGVQMMTFDSEIELMKVARAHPKAKLVLRIATDDSKAVCRLSVKFGATLKTSRLLLERAKELNIDVIGVSFHVGSGCTDPETFVQAVSDARCVFDMGTEVGFSMYLLDIGGGFPGSEDTKLKFEEITSVINPALDKYFPSDSGVRIIAEPGRYYVASAFTLAVNIIAKKTVWKEQPGSDDEDESNEQTFMYYVNDGVYGSFNCILYDHAHVKALLQKRPKPDEKYYSSSIWGPTCDGLDRIVERCNLPEMHVGDWMLFENMGAYTVAAASTFNGFQRPNIYYVMSRPMWQLMKRIQSHGFPPEVEEQDDGTLPMSCAQESGMDHHSAACASARINV.

Lysine 69 carries the post-translational modification N6-(pyridoxal phosphate)lysine. Residues serine 200, glycine 237, and 274 to 277 (EPGR) each bind pyridoxal 5'-phosphate. Phosphoserine; by CK2 is present on serine 303. 331–332 (YD) contributes to the substrate binding site. The active-site Proton donor; shared with dimeric partner is the cysteine 360. Position 360 is an S-nitrosocysteine (cysteine 360). Residue aspartate 361 participates in substrate binding. Tyrosine 389 contributes to the pyridoxal 5'-phosphate binding site.

This sequence belongs to the Orn/Lys/Arg decarboxylase class-II family. Homodimer. Only the dimer is catalytically active, as the active sites are constructed of residues from both monomers. Pyridoxal 5'-phosphate is required as a cofactor.

It carries out the reaction L-ornithine + H(+) = putrescine + CO2. The protein operates within amine and polyamine biosynthesis; putrescine biosynthesis via L-ornithine pathway; putrescine from L-ornithine: step 1/1. Inhibited by antizymes (AZs) OAZ1, OAZ2 and OAZ3 in response to polyamine levels. AZs inhibit the assembly of the functional homodimer by binding to ODC monomers. Additionally, OAZ1 targets ODC monomers for ubiquitin-independent proteolytic destruction by the 26S proteasome. Catalyzes the first and rate-limiting step of polyamine biosynthesis that converts ornithine into putrescine, which is the precursor for the polyamines, spermidine and spermine. Polyamines are essential for cell proliferation and are implicated in cellular processes, ranging from DNA replication to apoptosis. The protein is Ornithine decarboxylase (Odc1) of Mus pahari (Gairdner's shrew-mouse).